The chain runs to 305 residues: Acetaldehyde dehydrogenase (305 aa).

13–16 (SGNI) contributes to the NAD(+) binding site. Cysteine 128 functions as the Acyl-thioester intermediate in the catalytic mechanism. Residues 159–167 (SAGPGTRQN) and asparagine 278 each bind NAD(+).

The protein belongs to the acetaldehyde dehydrogenase family.

It carries out the reaction acetaldehyde + NAD(+) + CoA = acetyl-CoA + NADH + H(+). This chain is Acetaldehyde dehydrogenase, found in Chloroflexus aurantiacus (strain ATCC 29366 / DSM 635 / J-10-fl).